The primary structure comprises 207 residues: Sodium/potassium-transporting ATPase subunit beta-1-interacting protein 1 (207 aa).

Transmembrane regions (helical) follow at residues 2 to 22 (GRCD…VAAL), 35 to 55 (APIL…FGTV), and 62 to 82 (LILY…IICF). An N-linked (GlcNAc...) asparagine glycan is attached at Asn-100. Residues 147-167 (VVSSALQVFLALFGFVYACYV) traverse the membrane as a helical segment.

It belongs to the NKAIN family. As to quaternary structure, interacts with atp1b1 C-terminus.

It is found in the cell membrane. The polypeptide is Sodium/potassium-transporting ATPase subunit beta-1-interacting protein 1 (nkain1) (Danio rerio (Zebrafish)).